The following is a 166-amino-acid chain: Lipoprotein signal peptidase (166 aa).

The next 3 membrane-spanning stretches (helical) occupy residues 12–32 (WLWV…LILQ), 70–90 (WFFS…MYRS), and 102–122 (ALII…GFVV). Active-site residues include Asp123 and Asp141. A helical membrane pass occupies residues 137-157 (FNLADSAICIGAALIVLEGFL).

This sequence belongs to the peptidase A8 family.

It is found in the cell inner membrane. The enzyme catalyses Release of signal peptides from bacterial membrane prolipoproteins. Hydrolyzes -Xaa-Yaa-Zaa-|-(S,diacylglyceryl)Cys-, in which Xaa is hydrophobic (preferably Leu), and Yaa (Ala or Ser) and Zaa (Gly or Ala) have small, neutral side chains.. It functions in the pathway protein modification; lipoprotein biosynthesis (signal peptide cleavage). Its function is as follows. This protein specifically catalyzes the removal of signal peptides from prolipoproteins. This chain is Lipoprotein signal peptidase, found in Klebsiella pneumoniae subsp. pneumoniae (strain ATCC 700721 / MGH 78578).